Consider the following 357-residue polypeptide: Peptide chain release factor 1 (357 aa).

An N5-methylglutamine modification is found at Gln232. Over residues 282-291 the composition is skewed to basic and acidic residues; it reads KQRAEQEAAR. The interval 282–302 is disordered; sequence KQRAEQEAARRSQVGTGDRSE.

This sequence belongs to the prokaryotic/mitochondrial release factor family. Methylated by PrmC. Methylation increases the termination efficiency of RF1.

It localises to the cytoplasm. Its function is as follows. Peptide chain release factor 1 directs the termination of translation in response to the peptide chain termination codons UAG and UAA. In Solidesulfovibrio magneticus (strain ATCC 700980 / DSM 13731 / RS-1) (Desulfovibrio magneticus), this protein is Peptide chain release factor 1.